We begin with the raw amino-acid sequence, 1343 residues long: DNA-directed RNA polymerase subunit beta (1343 aa).

The protein belongs to the RNA polymerase beta chain family. In terms of assembly, the RNAP catalytic core consists of 2 alpha, 1 beta, 1 beta' and 1 omega subunit. When a sigma factor is associated with the core the holoenzyme is formed, which can initiate transcription.

It catalyses the reaction RNA(n) + a ribonucleoside 5'-triphosphate = RNA(n+1) + diphosphate. Its function is as follows. DNA-dependent RNA polymerase catalyzes the transcription of DNA into RNA using the four ribonucleoside triphosphates as substrates. The protein is DNA-directed RNA polymerase subunit beta of Haemophilus influenzae (strain PittGG).